Reading from the N-terminus, the 353-residue chain is Uroporphyrinogen decarboxylase (353 aa).

Substrate is bound by residues 27–31 (RQAGR), Phe46, Asp76, Tyr152, Ser207, and His321.

The protein belongs to the uroporphyrinogen decarboxylase family. As to quaternary structure, homodimer.

The protein resides in the cytoplasm. It catalyses the reaction uroporphyrinogen III + 4 H(+) = coproporphyrinogen III + 4 CO2. Its pathway is porphyrin-containing compound metabolism; protoporphyrin-IX biosynthesis; coproporphyrinogen-III from 5-aminolevulinate: step 4/4. Functionally, catalyzes the decarboxylation of four acetate groups of uroporphyrinogen-III to yield coproporphyrinogen-III. This is Uroporphyrinogen decarboxylase from Listeria monocytogenes serotype 4b (strain F2365).